Here is a 197-residue protein sequence, read N- to C-terminus: Peptide deformylase (197 aa).

The Fe cation site is built by C106 and H148. Residue E149 is part of the active site. H152 provides a ligand contact to Fe cation.

Belongs to the polypeptide deformylase family. Requires Fe(2+) as cofactor.

The enzyme catalyses N-terminal N-formyl-L-methionyl-[peptide] + H2O = N-terminal L-methionyl-[peptide] + formate. Its function is as follows. Removes the formyl group from the N-terminal Met of newly synthesized proteins. Requires at least a dipeptide for an efficient rate of reaction. N-terminal L-methionine is a prerequisite for activity but the enzyme has broad specificity at other positions. This is Peptide deformylase from Mycobacterium leprae (strain TN).